Here is a 335-residue protein sequence, read N- to C-terminus: 2,4-dienoyl-CoA reductase [(3E)-enoyl-CoA-producing], mitochondrial (335 aa).

A mitochondrion-targeting transit peptide spans 1-34; sequence MKLPARVFFTLGSRLPCGLAPRRFFSYGTKILYQ. An N6-acetyllysine; alternate mark is found at K42 and K49. N6-succinyllysine; alternate is present on residues K42 and K49. 66 to 71 lines the NADP(+) pocket; it reads GGGTGL. T69 is modified (phosphothreonine). K73 carries the N6-succinyllysine modification. R91 serves as a coordination point for NADP(+). A substrate-binding site is contributed by R91. K97 bears the N6-acetyllysine; alternate mark. K97 bears the N6-succinyllysine; alternate mark. D117 is an NADP(+) binding site. Residues R119, F149, and S157 each contribute to the substrate site. The active-site Proton acceptor is Y199. K214 contributes to the NADP(+) binding site. Residue K230 is modified to N6-acetyllysine. 240–243 provides a ligand contact to NADP(+); sequence PGPI. K244 carries the N6-acetyllysine; alternate modification. Residue K244 is modified to N6-succinyllysine; alternate. R251 serves as a coordination point for substrate. N6-acetyllysine; alternate is present on residues K260 and K319. An N6-succinyllysine; alternate mark is found at K260 and K319.

This sequence belongs to the short-chain dehydrogenases/reductases (SDR) family. 2,4-dienoyl-CoA reductase subfamily. In terms of assembly, homotetramer. In terms of tissue distribution, heart = liver = pancreas &gt; kidney &gt;&gt; skeletal muscle = lung.

It is found in the mitochondrion. It carries out the reaction a (2E,4E)-dienoyl-CoA + NADPH + H(+) = a 4,5-saturated-(3E)-enoyl-CoA + NADP(+). The enzyme catalyses a (2E,4Z)-dienoyl-CoA + NADPH + H(+) = a 4,5-saturated-(3E)-enoyl-CoA + NADP(+). The catalysed reaction is (2E,4E)-hexadienoyl-CoA + NADPH + H(+) = (3E)-hexenoyl-CoA + NADP(+). In terms of biological role, auxiliary enzyme of beta-oxidation. It participates in the metabolism of unsaturated fatty enoyl-CoA esters having double bonds in both even- and odd-numbered positions in mitochondria. Catalyzes the NADP-dependent reduction of 2,4-dienoyl-CoA to yield trans-3-enoyl-CoA. The polypeptide is 2,4-dienoyl-CoA reductase [(3E)-enoyl-CoA-producing], mitochondrial (DECR1) (Homo sapiens (Human)).